A 388-amino-acid chain; its full sequence is S-adenosylmethionine synthase (388 aa).

An ATP-binding site is contributed by His-16. Asp-18 is a Mg(2+) binding site. Residue Glu-44 coordinates K(+). L-methionine contacts are provided by Glu-57 and Gln-100. The segment at 100–110 (QSPDIAQGVDK) is flexible loop. ATP-binding positions include 167-169 (DAK), 233-234 (RF), Asp-242, 248-249 (RK), Ala-265, and Lys-269. Asp-242 contacts L-methionine. Lys-273 is an L-methionine binding site.

It belongs to the AdoMet synthase family. Homotetramer; dimer of dimers. Mg(2+) is required as a cofactor. It depends on K(+) as a cofactor.

It localises to the cytoplasm. It carries out the reaction L-methionine + ATP + H2O = S-adenosyl-L-methionine + phosphate + diphosphate. It participates in amino-acid biosynthesis; S-adenosyl-L-methionine biosynthesis; S-adenosyl-L-methionine from L-methionine: step 1/1. In terms of biological role, catalyzes the formation of S-adenosylmethionine (AdoMet) from methionine and ATP. The overall synthetic reaction is composed of two sequential steps, AdoMet formation and the subsequent tripolyphosphate hydrolysis which occurs prior to release of AdoMet from the enzyme. This is S-adenosylmethionine synthase from Polynucleobacter necessarius subsp. necessarius (strain STIR1).